Consider the following 210-residue polypeptide: Outer-membrane lipoprotein LolB (210 aa).

Positions 1–26 are cleaved as a signal peptide; sequence MSKLKIDTKRRFSLLIALVLIISLSS. A lipid anchor (N-palmitoyl cysteine) is attached at C27. Residue C27 is the site of S-diacylglycerol cysteine attachment.

This sequence belongs to the LolB family. As to quaternary structure, monomer.

The protein resides in the cell outer membrane. Functionally, plays a critical role in the incorporation of lipoproteins in the outer membrane after they are released by the LolA protein. This Francisella tularensis subsp. holarctica (strain FTNF002-00 / FTA) protein is Outer-membrane lipoprotein LolB.